The primary structure comprises 74 residues: Exodeoxyribonuclease 7 small subunit (74 aa).

This sequence belongs to the XseB family. Heterooligomer composed of large and small subunits.

It is found in the cytoplasm. It carries out the reaction Exonucleolytic cleavage in either 5'- to 3'- or 3'- to 5'-direction to yield nucleoside 5'-phosphates.. Functionally, bidirectionally degrades single-stranded DNA into large acid-insoluble oligonucleotides, which are then degraded further into small acid-soluble oligonucleotides. In Thermotoga neapolitana (strain ATCC 49049 / DSM 4359 / NBRC 107923 / NS-E), this protein is Exodeoxyribonuclease 7 small subunit.